Here is a 78-residue protein sequence, read N- to C-terminus: UPF0349 protein BPUM_2879 (78 aa).

The protein belongs to the UPF0349 family.

This chain is UPF0349 protein BPUM_2879, found in Bacillus pumilus (strain SAFR-032).